The following is a 491-amino-acid chain: Pre-glycoprotein polyprotein GP complex (491 aa).

G2 carries N-myristoyl glycine; by host lipidation. Residues 2–17 lie on the Extracellular side of the membrane; the sequence is GQIVTFFQEVPHVIEE. A helical transmembrane segment spans residues 18-33; that stretch reads VMNIVLIALSVLAVLK. The Cytoplasmic segment spans residues 34 to 58; that stretch reads GLYNFATCGLVGLVTFLLLCGRSCT. C57 provides a ligand contact to Zn(2+). Residues 59-432 are Extracellular-facing; that stretch reads TSLYKGVYEL…QGKTPLGLVD (374 aa). N-linked (GlcNAc...) asparagine; by host glycans are attached at residues N79, N89, N99, N109, N119, and N167. 6 disulfides stabilise this stretch: C86-C231, C118-C155, C180-C212, C279-C292, C301-C310, and C364-C385. An N-linked (GlcNAc...) asparagine; by host glycan is attached at N224. N-linked (GlcNAc...) asparagine; by host glycans are attached at residues N365, N373, N390, and N395. A helical membrane pass occupies residues 433-453; the sequence is LFVFSTSFYLISIFLHLVKIP. Residues 454-491 lie on the Cytoplasmic side of the membrane; that stretch reads THRHIVGKSCPKPHRLNHMGICSCGLYKQPGVPVKWKR. H455, H457, C463, H467, C475, and C477 together coordinate Zn(2+).

The protein belongs to the arenaviridae GPC protein family. In terms of assembly, interacts with glycoprotein G2. Part of the GP complex (GP-C) together with glycoprotein G1 and glycoprotein G2. The GP-complex interacts with protein Z, which interacts with ribonucleocapsid; these interactions may induce virion budding. As to quaternary structure, homotrimer; disulfide-linked. In pre-fusion state, G1 homotrimers bind G2 homotrimers via ionic interactions. Part of the GP complex (GP-C) together with glycoprotein G2 and the stable signal peptide. Interacts with the primary host receptor DAG1 on the cell surface; this interaction occurs at pH 8.0 but not at pH 6.0 and below. Upon virus internalization and at endosomal pH, interacts with the host lysosomal protein LAMP1; this interaction mediates G1 dissociation from GP-C and membrane fusion. The GP-complex interacts with protein Z, which interacts with ribonucleocapsid; these interactions may induce virion budding. Homotrimer. Interacts with the stable signal peptide. In pre-fusion state, G2 homotrimers bind G1 homotrimers via ionic interactions. Part of the GP complex (GP-C) together with glycoprotein G1 and the stable signal peptide. Acidification in the endosome triggers rearrangements, which ultimately leads to a 6 helix bundle formed by the two heptad repeat domains (HR1 and HR2) in post-fusion state. The GP-complex interacts with protein Z, which interacts with ribonucleocapsid; these interactions may induce virion budding. In terms of processing, specific enzymatic cleavages in vivo yield mature proteins. GP-C polyprotein is cleaved in the endoplasmic reticulum by the host protease MBTPS1. Only cleaved glycoprotein is incorporated into virions. The SSP remains stably associated with the GP complex following cleavage by signal peptidase and plays crucial roles in the trafficking of GP through the secretory pathway. Post-translationally, myristoylation is necessary for GP2-mediated fusion activity.

It is found in the virion membrane. It localises to the host endoplasmic reticulum membrane. Its subcellular location is the host Golgi apparatus membrane. The protein resides in the host cell membrane. In terms of biological role, functions as a cleaved signal peptide that is retained as the third component of the GP complex (GP-C). Helps to stabilize the spike complex in its native conformation. The SSP is required for efficient glycoprotein expression, post-translational maturation cleavage of G1 and G2, glycoprotein transport to the cell surface plasma membrane, formation of infectious virus particles, and acid pH-dependent glycoprotein-mediated cell fusion. Forms the virion spikes together with glycoprotein G2. The glycoprotein spike trimers are connected to the underlying matrix. Interacts with the host receptor. Mediates virus attachment to the host primary receptor alpha-dystroglycan DAG1 (alpha-DG) at the cell surface. This attachment induces virion internalization apparently through macropinocytosis. Following endocytosis, there is a pH-dependent switch from binding DAG1 to the host lysosomal receptor LAMP1. This latter binding triggers the dissociation of GP1, exposing the fusion subunit, GP2, such that fusion can occur. Down-modulates host DAG1. Its function is as follows. Forms the virion spikes together with glycoprotein G1. The glycoprotein spike trimers are connected to the underlying matrix. Class I viral fusion protein that directs fusion of viral and host endosomal membranes, leading to delivery of the nucleocapsid into the cytoplasm. Membrane fusion is mediated by irreversible conformational changes induced by acidification. The polypeptide is Pre-glycoprotein polyprotein GP complex (Homo sapiens (Human)).